Consider the following 531-residue polypeptide: Dimethylnonatriene synthase (531 aa).

The chain crosses the membrane as a helical span at residues T6–A26. Position 464 (C464) interacts with heme.

This sequence belongs to the cytochrome P450 family. Requires heme as cofactor.

It is found in the membrane. The catalysed reaction is (6E,10E)-geranyllinalool + reduced [NADPH--hemoprotein reductase] + O2 = (3E,7E)-4,8,12-trimethyltrideca 1,3,7,11-tetraene + but-3-en-2-one + oxidized [NADPH--hemoprotein reductase] + 2 H2O + H(+). The enzyme catalyses (3S,6E)-nerolidol + reduced [NADPH--hemoprotein reductase] + O2 = (3E)-4,8-dimethylnona-1,3,7-triene + but-3-en-2-one + oxidized [NADPH--hemoprotein reductase] + 2 H2O + H(+). It functions in the pathway secondary metabolite biosynthesis; terpenoid biosynthesis. In terms of biological role, involved in the biosynthesis of homoterpenes, attractants of herbivores parasitoids and predators (e.g. predatory mites and parasitoid wasps). Component of the volatile terpenes biosynthesis pathways. Converts mainly nerolidol to dimethylnonatriene (DMNT) and, to a lower extent, geranyllinalool to trimethyltridecatetraene (TMTT). The polypeptide is Dimethylnonatriene synthase (Zea mays (Maize)).